The primary structure comprises 176 residues: UBA-like domain-containing protein 1 (176 aa).

Residues 87 to 176 (SESFHGGGGS…RAHPAMEAER (90 aa)) are disordered. Positions 120 to 137 (TPSWPTAASPPGGPQQHQ) are enriched in low complexity. Positions 138-150 (PQPPLWTPAPPSP) are enriched in pro residues. Over residues 166-176 (PRAHPAMEAER) the composition is skewed to basic and acidic residues.

Belongs to the UBALD family.

This is UBA-like domain-containing protein 1 (Ubald1) from Mus musculus (Mouse).